The chain runs to 104 residues: Small ribosomal subunit protein uS10 (104 aa).

It belongs to the universal ribosomal protein uS10 family. Part of the 30S ribosomal subunit.

In terms of biological role, involved in the binding of tRNA to the ribosomes. The polypeptide is Small ribosomal subunit protein uS10 (Gloeobacter violaceus (strain ATCC 29082 / PCC 7421)).